Consider the following 420-residue polypeptide: UPF0229 protein LPC_3097 (420 aa).

The segment at 83–107 is disordered; sequence IAGDRIKRPGGGAGGAGGNASDSGE. Over residues 91–100 the composition is skewed to gly residues; it reads PGGGAGGAGG.

It belongs to the UPF0229 family.

The protein is UPF0229 protein LPC_3097 of Legionella pneumophila (strain Corby).